Consider the following 201-residue polypeptide: tRNA (guanine-N(7)-)-methyltransferase (201 aa).

Residues glutamate 33, glutamate 58, aspartate 85, and aspartate 106 each contribute to the S-adenosyl-L-methionine site. Residue aspartate 106 is part of the active site. Substrate-binding positions include lysine 110, aspartate 142, and 180–183 (TTYE).

It belongs to the class I-like SAM-binding methyltransferase superfamily. TrmB family.

It carries out the reaction guanosine(46) in tRNA + S-adenosyl-L-methionine = N(7)-methylguanosine(46) in tRNA + S-adenosyl-L-homocysteine. Its pathway is tRNA modification; N(7)-methylguanine-tRNA biosynthesis. Catalyzes the formation of N(7)-methylguanine at position 46 (m7G46) in tRNA. This Mesomycoplasma hyopneumoniae (strain 7448) (Mycoplasma hyopneumoniae) protein is tRNA (guanine-N(7)-)-methyltransferase.